The sequence spans 114 residues: MLIVIFHKAIFSNSSLASSTLASSLLISFSSFLFISSVCLFTSSSFFADSVTCSFSTCSFSSTFGCFSSSFLSLSCLMSTLSALISCSACPRLSVFTVVVSASLGSVFTILTDS.

3 helical membrane passes run Leu-21–Phe-41, Gly-65–Ile-85, and Leu-93–Asp-113.

It localises to the membrane. This is an uncharacterized protein from Saccharomyces cerevisiae (strain ATCC 204508 / S288c) (Baker's yeast).